The following is a 271-amino-acid chain: Putative hydro-lyase Mrad2831_3350 (271 aa).

The protein belongs to the D-glutamate cyclase family.

In Methylobacterium radiotolerans (strain ATCC 27329 / DSM 1819 / JCM 2831 / NBRC 15690 / NCIMB 10815 / 0-1), this protein is Putative hydro-lyase Mrad2831_3350.